We begin with the raw amino-acid sequence, 266 residues long: 2-hydroxyisocaproyl-CoA dehydratase activator (266 aa).

ATP-binding positions include 10 to 14 and 102 to 104; these read STASK and GQD. Cys125 serves as a coordination point for [4Fe-4S] cluster. Residue Asp134 participates in ATP binding. Cys164 contributes to the [4Fe-4S] cluster binding site. ATP contacts are provided by Gly215 and Gln241.

This sequence belongs to the HadI activator family. Homodimer. It depends on [4Fe-4S] cluster as a cofactor.

In terms of biological role, involved in the reductive branch of L-leucine fermentation. Required for the activation of (R)-2-hydroxyisocaproyl-CoA dehydratase. The reduced activator transfers one electron to the dehydratase concomitant with hydrolysis of ATP. This protein is extremely sensitive towards oxygen. This chain is 2-hydroxyisocaproyl-CoA dehydratase activator, found in Clostridioides difficile (Peptoclostridium difficile).